A 200-amino-acid polypeptide reads, in one-letter code: ATP-dependent Clp protease proteolytic subunit 1 (200 aa).

Ser98 functions as the Nucleophile in the catalytic mechanism. The active site involves His123.

This sequence belongs to the peptidase S14 family. In terms of assembly, fourteen ClpP subunits assemble into 2 heptameric rings which stack back to back to give a disk-like structure with a central cavity, resembling the structure of eukaryotic proteasomes.

The protein resides in the cytoplasm. It carries out the reaction Hydrolysis of proteins to small peptides in the presence of ATP and magnesium. alpha-casein is the usual test substrate. In the absence of ATP, only oligopeptides shorter than five residues are hydrolyzed (such as succinyl-Leu-Tyr-|-NHMec, and Leu-Tyr-Leu-|-Tyr-Trp, in which cleavage of the -Tyr-|-Leu- and -Tyr-|-Trp bonds also occurs).. Functionally, cleaves peptides in various proteins in a process that requires ATP hydrolysis. Has a chymotrypsin-like activity. Plays a major role in the degradation of misfolded proteins. The sequence is that of ATP-dependent Clp protease proteolytic subunit 1 from Mycobacterium bovis (strain ATCC BAA-935 / AF2122/97).